The following is a 201-amino-acid chain: Small ribosomal subunit protein uS4c (201 aa).

The interval 20–43 (GLTSKRPRAGSDLRNQSRSGKRSQ) is disordered. One can recognise an S4 RNA-binding domain in the interval 89–149 (MRLDNILFRL…NEQKSRALIQ (61 aa)).

The protein belongs to the universal ribosomal protein uS4 family. In terms of assembly, part of the 30S ribosomal subunit. Contacts protein S5. The interaction surface between S4 and S5 is involved in control of translational fidelity.

It is found in the plastid. It localises to the chloroplast. In terms of biological role, one of the primary rRNA binding proteins, it binds directly to 16S rRNA where it nucleates assembly of the body of the 30S subunit. Its function is as follows. With S5 and S12 plays an important role in translational accuracy. The sequence is that of Small ribosomal subunit protein uS4c (rps4) from Vitis vinifera (Grape).